The sequence spans 134 residues: Methylmalonyl-CoA decarboxylase subunit gamma (134 aa).

Positions alanine 28 to alanine 38 are enriched in low complexity. A disordered region spans residues alanine 28–threonine 67. Over residues proline 39 to alanine 53 the composition is skewed to pro residues. Residues proline 54 to threonine 67 show a composition bias toward low complexity. In terms of domain architecture, Biotinyl-binding spans alanine 58–serine 134. Lysine 100 carries the N6-biotinyllysine modification.

In terms of assembly, the methylmalonyl-CoA decarboxylase is composed of four subunits: the carboxyltransferase alpha subunit (MmdA), the tunnel beta subunit (MmdB), the biotin-containing gamma subunit (MmdC) and the delta subunit (MmdD). Biotin serves as cofactor.

The protein resides in the cell membrane. It carries out the reaction (S)-methylmalonyl-CoA + Na(+)(in) + H(+)(out) = propanoyl-CoA + Na(+)(out) + CO2. Biotin-containing subunit of the sodium ion pump methylmalonyl-CoA decarboxylase, which converts the chemical energy of a decarboxylation reaction into an electrochemical gradient of Na(+) ions across the cytoplasmic membrane, thereby creating a sodium ion motive force that is used for ATP synthesis. The sequence is that of Methylmalonyl-CoA decarboxylase subunit gamma from Propionigenium modestum.